Here is a 400-residue protein sequence, read N- to C-terminus: Pectinesterase B (400 aa).

2 residues coordinate substrate: threonine 171 and glutamine 205. Aspartate 228 serves as the catalytic Proton donor. Aspartate 261 (nucleophile) is an active-site residue. Substrate is bound by residues arginine 325 and tryptophan 327.

Belongs to the pectinesterase family.

It carries out the reaction [(1-&gt;4)-alpha-D-galacturonosyl methyl ester](n) + n H2O = [(1-&gt;4)-alpha-D-galacturonosyl](n) + n methanol + n H(+). Its pathway is glycan metabolism; pectin degradation; 2-dehydro-3-deoxy-D-gluconate from pectin: step 1/5. The polypeptide is Pectinesterase B (pemB) (Pectobacterium parmentieri).